We begin with the raw amino-acid sequence, 205 residues long: ESCRT-related protein CHMP1 (205 aa).

2 coiled-coil regions span residues aspartate 13–alanine 51 and glycine 109–alanine 140.

This sequence belongs to the SNF7 family.

It localises to the cytoplasm. Its subcellular location is the endosome membrane. Involved in ESCRT-dependent multivesicular body (MVB) formation and sorting of endosomal cargo proteins into MVBs. This chain is ESCRT-related protein CHMP1, found in Oryza sativa subsp. japonica (Rice).